A 201-amino-acid polypeptide reads, in one-letter code: Small ribosomal subunit protein uS5 (201 aa).

Positions 1–28 are disordered; that stretch reads MAHQNEQRGGGDRGRGRGRGRDRDQERD. Positions 31-94 constitute an S5 DRBM domain; sequence LVDKLVHINR…DEAKKNMIRV (64 aa). The interval 173–201 is disordered; that stretch reads SVAAKRGLKVGDLVNRRDDGASSPEAIEA.

This sequence belongs to the universal ribosomal protein uS5 family. In terms of assembly, part of the 30S ribosomal subunit. Contacts proteins S4 and S8.

In terms of biological role, with S4 and S12 plays an important role in translational accuracy. Its function is as follows. Located at the back of the 30S subunit body where it stabilizes the conformation of the head with respect to the body. In Maricaulis maris (strain MCS10) (Caulobacter maris), this protein is Small ribosomal subunit protein uS5.